The sequence spans 711 residues: MLFRSVVNKPRFGCGHNGAPFTSPLQSLLQCYQCVKQDEHISYGDLGRAVPPFGCAFSTVPGMSHVLAVANEEGIVRLYDTECGDMQRLVVKEFMAHTNAVFDIAWVPGEHKLVTASGDQTAKLWDVKAGELIGECKGHQCSLKSVAFSKFERAVFSTGGRDGNIMVWDTRCNKKDGFYRQVNQITGAHNAIDKQTPSKVKKRKPSIRGLAPSVDSQQSVTVVIFQDEYTVISAGAVDGVVKIWDLRKNYSTYRQDPVPVKLFPYPGNSTRKLGYSSLVLDPTGTNLFASCTDDNVYMFNATGLKTDPVSVFRGHQNSTFYIKASVSPDGQFLLSGSSDHSAYIWQVSDPLAAPINLIGHCQEVTSVAWCQSDFTKIATCSDDNTVRIWRLNRSSEDSSESNKTDYVGWACKKKFEPSSMAAILCTPGKPSMIPSSSLMSSPTPATCAPSNTGDLPLPSSTPLSALLPTSKLQTPKRINNGGLGASPKQMSSSKISIKDWVTRTPKSSKGTDSKTPSPRKAFTPVEQYPIVSNARVQLPYEKRAKRRLETSSEDVEHVCLDNCCVMELEPRLKKSKLDLCSLNERDCRDDKCLRLSDLSKEFDQELSPSPSTSLHMNATDNPPTLSPLSEMKSDFVDKENSSPEKNWLSALGHKFKSDNSSPQFKSSSSPSSRNSTSKKHQPRNAPNSPVSVPTTPGSMRKICTYFFKKSE.

3 WD repeats span residues Gly47–Leu89, Ala96–Glu135, and Gly138–Phe178. Residues Trp168 to Arg171 carry the DDB1-binding motif motif. The Nuclear localization signal signature appears at Pro197–Lys204. WD repeat units follow at residues Asp215–Arg254, Thr270–Val309, Gly314–Ile355, and Gly359–Ser398. The DDB1-binding motif signature appears at Trp244–Arg247. Disordered stretches follow at residues Gln473–Pro524 and Glu601–Ser698. 2 stretches are compositionally biased toward polar residues: residues Thr504–Pro516 and Leu606–Pro627. Residues Met631–Ser642 show a composition bias toward basic and acidic residues. A compositionally biased stretch (low complexity) spans Asp658–Ser675. Residues Asn684–Gly697 show a composition bias toward polar residues.

The protein belongs to the WD repeat cdt2 family. Component of the DCX(DTL) E3 ubiquitin ligase complex, at least composed of cul4 (cul4a or cul4b), ddb1, dtl/cdt2 and rbx1.

Its subcellular location is the nucleus. It localises to the cytoplasm. It is found in the cytoskeleton. The protein localises to the microtubule organizing center. The protein resides in the centrosome. Its subcellular location is the chromosome. Its pathway is protein modification; protein ubiquitination. Functionally, substrate-specific adapter of a DCX (DDB1-CUL4-X-box) E3 ubiquitin-protein ligase complex required for cell cycle control, DNA damage response and translesion DNA synthesis. The DCX(DTL) complex, also named CRL4(CDT2) complex, mediates the polyubiquitination and subsequent degradation of CDT1, CDKN1A/p21(CIP1), KMT5A and SDE2. CDT1 degradation in response to DNA damage is necessary to ensure proper cell cycle regulation of DNA replication. CDKN1A/p21(CIP1) degradation during S phase or following UV irradiation is essential to control replication licensing. KMT5A degradation is also important for a proper regulation of mechanisms such as TGF-beta signaling, cell cycle progression, DNA repair and cell migration. Most substrates require their interaction with PCNA for their polyubiquitination: substrates interact with PCNA via their PIP-box, and those containing the 'K+4' motif in the PIP box, recruit the DCX(DTL) complex, leading to their degradation. In undamaged proliferating cells, the DCX(DTL) complex also promotes the 'Lys-164' monoubiquitination of PCNA, thereby being involved in PCNA-dependent translesion DNA synthesis. May play a role in the regulation of the circadian clock. The chain is Denticleless protein homolog B (dtl-b) from Xenopus laevis (African clawed frog).